A 351-amino-acid polypeptide reads, in one-letter code: Prostaglandin reductase 2 (351 aa).

Position 99-100 (Phe99–Tyr100) interacts with substrate. NADP(+) contacts are provided by residues Gly165–Gly168, Lys192, Tyr208, Asn231, Cys253–Tyr259, Phe287–Val289, and Asn337. Leu288–Leu290 is a binding site for substrate.

Belongs to the NADP-dependent oxidoreductase L4BD family. In terms of assembly, monomer. Widely expressed.

The protein localises to the cytoplasm. The enzyme catalyses 13,14-dihydro-15-oxo-prostaglandin E2 + NAD(+) = 15-oxoprostaglandin E2 + NADH + H(+). It carries out the reaction 13,14-dihydro-15-oxo-prostaglandin E2 + NADP(+) = 15-oxoprostaglandin E2 + NADPH + H(+). The catalysed reaction is 13,14-dihydro-15-oxo-PGF2alpha + NADP(+) = 15-oxoprostaglandin F2alpha + NADPH + H(+). It catalyses the reaction 13,14-dihydro-15-oxo-prostaglandin E1 + NADP(+) = 15-oxoprostaglandin E1 + NADPH + H(+). The enzyme catalyses 13,14-dihydro-15-oxo-prostaglandin F1alpha + NADP(+) = 15-oxoprostaglandin F1alpha + NADPH + H(+). Its function is as follows. Functions as 15-oxo-prostaglandin 13-reductase and acts on 15-keto-PGE1, 15-keto-PGE2, 15-keto-PGE1-alpha and 15-keto-PGE2-alpha with highest activity towards 15-keto-PGE2. Overexpression represses transcriptional activity of PPARG and inhibits adipocyte differentiation. This is Prostaglandin reductase 2 from Homo sapiens (Human).